Reading from the N-terminus, the 218-residue chain is UPF0502 protein Mmwyl1_3509 (218 aa).

It belongs to the UPF0502 family.

The chain is UPF0502 protein Mmwyl1_3509 from Marinomonas sp. (strain MWYL1).